A 130-amino-acid polypeptide reads, in one-letter code: Small ribosomal subunit protein uS9 (130 aa).

It belongs to the universal ribosomal protein uS9 family.

This Geobacillus sp. (strain WCH70) protein is Small ribosomal subunit protein uS9.